The sequence spans 49 residues: Defensin Tk-AMP-D1 (49 aa).

4 cysteine pairs are disulfide-bonded: cysteine 3–cysteine 49, cysteine 14–cysteine 34, cysteine 20–cysteine 43, and cysteine 24–cysteine 45.

In terms of biological role, has weak antifungal activity against F.graminearum and F.verticillioides below 30 ug/ml, but not against A.consortiale B.cinerea, H.sativum, F.culmorum, C.graminicola and D.maydis. In Triticum kiharae (Wheat), this protein is Defensin Tk-AMP-D1.